We begin with the raw amino-acid sequence, 507 residues long: MPPDLRMQPLPFPMMTLTSETKLDLEKAGVLVLGVEPSADSGESSDGKTTANCIAVSSLPESLAATVKNACSSGEVTGKPGELTSFATGNAQTPWIVLAGLGASDKRTRGSAIELGAAVVRSLASKPRQQITFALGDGVATENHDAVVAGAVSGCEGQHLYQREPSISVPEAIAFVGYSAESVSRGEKLGQSINHTRRLVNEPPSIMNPTGFAQYAEKIASDCGLTCEVWDEKKLEAENCRAILAVGRASTSPPRLVMLRHDGGGDEAPLVVVGKGVTFDSGGLSLKPSDGMVDMKCDMAGAATVVGVMNALAKLKVPRNVIGLCGLAENMVSGDSYKLGDVIETRSGKTIEILNTDAEGRVVLADTLDVAVQQKPQAIVDLATLTGACMVALGIDVAGLMTNNQALCDAVQSAAESECEPVWQLPMFSLYDDKVKSKVADIKNVGEGRWGGAITAAKFLENFVADVPWVHIDIAGPAFVDSPKPHRDAGATGVMVRSLVRWIENAS.

Lys-275 and Asp-280 together coordinate Mn(2+). Residue Lys-287 is part of the active site. Mn(2+) contacts are provided by Asp-298, Asp-357, and Glu-359. The active site involves Arg-361.

This sequence belongs to the peptidase M17 family. Requires Mn(2+) as cofactor.

It localises to the cytoplasm. It carries out the reaction Release of an N-terminal amino acid, Xaa-|-Yaa-, in which Xaa is preferably Leu, but may be other amino acids including Pro although not Arg or Lys, and Yaa may be Pro. Amino acid amides and methyl esters are also readily hydrolyzed, but rates on arylamides are exceedingly low.. The enzyme catalyses Release of an N-terminal amino acid, preferentially leucine, but not glutamic or aspartic acids.. Its function is as follows. Presumably involved in the processing and regular turnover of intracellular proteins. Catalyzes the removal of unsubstituted N-terminal amino acids from various peptides. This chain is Probable cytosol aminopeptidase, found in Rhodopirellula baltica (strain DSM 10527 / NCIMB 13988 / SH1).